The following is a 138-amino-acid chain: Host cell factor C1 regulator 1 (138 aa).

Residues 76 to 79 (DHPY) are interaction with HCFC1. Positions 110-119 (IPEALRLLRL) match the Nuclear export signal motif.

Interacts with HCFC1. In terms of tissue distribution, widely expressed.

The protein resides in the cytoplasm. It localises to the nucleus. In terms of biological role, regulates HCFC1 activity by modulating its subcellular localization. Overexpression of HCFC1R1 leads to accumulation of HCFC1 in the cytoplasm. HCFC1R1-mediated export may provide the pool of cytoplasmic HCFC1 required for import of virion-derived VP16 into the nucleus. This is Host cell factor C1 regulator 1 (HCFC1R1) from Homo sapiens (Human).